A 20-amino-acid polypeptide reads, in one-letter code: Non-specific lipid-transfer protein-like protein (20 aa).

This sequence belongs to the plant LTP family.

This is Non-specific lipid-transfer protein-like protein from Jatropha curcas (Barbados nut).